Consider the following 148-residue polypeptide: Transcriptional regulator MraZ (148 aa).

2 SpoVT-AbrB domains span residues 5-53 (ETAI…AEKE) and 82-125 (SAVL…SEQA).

Belongs to the MraZ family. In terms of assembly, forms oligomers.

Its subcellular location is the cytoplasm. It localises to the nucleoid. The sequence is that of Transcriptional regulator MraZ from Xanthomonas oryzae pv. oryzae (strain MAFF 311018).